The sequence spans 271 residues: MSVHKMVKRITSSQIRARKGQQPIVSLTAYQAYTARIADPYCDILLVGDSVGMVVYGFETTLPVNLDMMILHGQAVVRGSQKALVVIDMPFGSYEESKEQAFLNASRILAQTGCGAVKLEGGVYMAETIDFLCKRGIPVMGHIGLTPQAVNRFGGFNTQGRKESDWQRIEDDAVVIENAGAFAIVLEGIVEPLAVKLTEKLSIPTIGIGASNQCDGQVLVMEDMLGYGAHVPKFVRRYGDLEQAMETAIKNYAEDVTSRAFPAEKEVYKLK.

Mg(2+) is bound by residues D49 and D88. 3-methyl-2-oxobutanoate-binding positions include 49 to 50 (DS), D88, and K118. E120 is a Mg(2+) binding site. The Proton acceptor role is filled by E187.

It belongs to the PanB family. Homodecamer; pentamer of dimers. Mg(2+) serves as cofactor.

It is found in the cytoplasm. It carries out the reaction 3-methyl-2-oxobutanoate + (6R)-5,10-methylene-5,6,7,8-tetrahydrofolate + H2O = 2-dehydropantoate + (6S)-5,6,7,8-tetrahydrofolate. The protein operates within cofactor biosynthesis; (R)-pantothenate biosynthesis; (R)-pantoate from 3-methyl-2-oxobutanoate: step 1/2. Catalyzes the reversible reaction in which hydroxymethyl group from 5,10-methylenetetrahydrofolate is transferred onto alpha-ketoisovalerate to form ketopantoate. This chain is 3-methyl-2-oxobutanoate hydroxymethyltransferase, found in Bartonella tribocorum (strain CIP 105476 / IBS 506).